The primary structure comprises 463 residues: L-cystine uptake protein TcyP (463 aa).

Helical transmembrane passes span 3 to 23 (TLLV…LFVM), 34 to 54 (VFTA…IYGP), 73 to 93 (YVKL…LGAF), 105 to 125 (ISGL…AVGI), 184 to 204 (PTST…FLGV), 225 to 245 (IVMR…LAIM), 262 to 282 (MFVI…LLLL), 338 to 358 (LSIG…MMIA), 369 to 389 (VFII…AGVG), and 394 to 414 (FAAL…GLLI).

It belongs to the dicarboxylate/amino acid:cation symporter (DAACS) (TC 2.A.23) family.

It localises to the cell membrane. Its function is as follows. Mediates uptake of L-cystine, the oxidized form of L-cysteine. Although it is more specific for L-cystine, it could also transport a much broader range of amino acids and sulfur compounds including S-methylcysteine. The sequence is that of L-cystine uptake protein TcyP (tcyP) from Bacillus subtilis (strain 168).